The sequence spans 151 residues: Small ribosomal subunit protein uS15 (151 aa).

Belongs to the universal ribosomal protein uS15 family.

This Zea mays (Maize) protein is Small ribosomal subunit protein uS15 (RPS13).